We begin with the raw amino-acid sequence, 936 residues long: MutS protein homolog 4 (936 aa).

2 disordered regions span residues 1-83 and 103-133; these read MLRP…AQGS and GASS…SGYK. Over residues 7–20 the composition is skewed to low complexity; the sequence is SSTSPSAPAVSPSS. The segment covering 35-55 has biased composition (polar residues); sequence LQETPQSRPSVQVVSASTCPG. Residue 680–687 coordinates ATP; that stretch reads GPNMSGKS.

The protein belongs to the DNA mismatch repair MutS family. In terms of assembly, heterooligomer of MSH4 and MSH5. As to expression, highly expressed in testis. Also expressed in the ovary.

It is found in the chromosome. Involved in meiotic recombination. Required for reciprocal recombination and proper segregation of homologous chromosomes at meiosis. In Homo sapiens (Human), this protein is MutS protein homolog 4 (MSH4).